The chain runs to 161 residues: E3 ubiquitin ligase complex SCF subunit sconC (161 aa).

The interval 103 to 161 (ILAANYLDIKGLLDVGCKTVANMIKGKSPEEIRKTFNIQNDFTPEEEDQIRRENEWAEE) is interaction with the F-box domain of F-box proteins.

The protein belongs to the SKP1 family. Component of the SCF (SKP1-CUL1-F-box protein) E3 ubiquitin ligase complexes.

The protein operates within protein modification; protein ubiquitination. Essential component of the SCF (SKP1-CUL1-F-box protein) E3 ubiquitin ligase complexes, which mediate the ubiquitination and subsequent proteasomal degradation of target proteins. Controls sulfur metabolite repression, probably by mediating the inactivation or degradation of the metR transcription factor. This chain is E3 ubiquitin ligase complex SCF subunit sconC (sconC), found in Aspergillus terreus (strain NIH 2624 / FGSC A1156).